The sequence spans 225 residues: Holliday junction branch migration complex subunit RuvA (225 aa).

Residues 1–71 form a domain I region; that stretch reads MISWISGELV…EDSDLLFGFS (71 aa). A domain II region spans residues 72 to 150; the sequence is SKDQKNFFIE…NELKIQEEKS (79 aa). The interval 151–161 is flexible linker; it reads KDEFHIKDNKI. The interval 161-225 is domain III; it reads INKIVSDIEL…LDNDSSNIVR (65 aa).

This sequence belongs to the RuvA family. As to quaternary structure, homotetramer. Forms an RuvA(8)-RuvB(12)-Holliday junction (HJ) complex. HJ DNA is sandwiched between 2 RuvA tetramers; dsDNA enters through RuvA and exits via RuvB. An RuvB hexamer assembles on each DNA strand where it exits the tetramer. Each RuvB hexamer is contacted by two RuvA subunits (via domain III) on 2 adjacent RuvB subunits; this complex drives branch migration. In the full resolvosome a probable DNA-RuvA(4)-RuvB(12)-RuvC(2) complex forms which resolves the HJ.

It is found in the cytoplasm. Functionally, the RuvA-RuvB-RuvC complex processes Holliday junction (HJ) DNA during genetic recombination and DNA repair, while the RuvA-RuvB complex plays an important role in the rescue of blocked DNA replication forks via replication fork reversal (RFR). RuvA specifically binds to HJ cruciform DNA, conferring on it an open structure. The RuvB hexamer acts as an ATP-dependent pump, pulling dsDNA into and through the RuvAB complex. HJ branch migration allows RuvC to scan DNA until it finds its consensus sequence, where it cleaves and resolves the cruciform DNA. This is Holliday junction branch migration complex subunit RuvA from Prochlorococcus marinus (strain MIT 9312).